A 27-amino-acid polypeptide reads, in one-letter code: Caerulein precursor fragment R5 (27 aa).

Expressed by the skin glands.

Its subcellular location is the secreted. Its function is as follows. Antimicrobial peptide. This is Caerulein precursor fragment R5 from Xenopus ruwenzoriensis (Uganda clawed frog).